A 205-amino-acid polypeptide reads, in one-letter code: Large ribosomal subunit protein uL4 (205 aa).

A disordered region spans residues 47–70 (TRAQKSRAEVSGGGKKPFRQKGTG).

This sequence belongs to the universal ribosomal protein uL4 family. In terms of assembly, part of the 50S ribosomal subunit.

Functionally, one of the primary rRNA binding proteins, this protein initially binds near the 5'-end of the 23S rRNA. It is important during the early stages of 50S assembly. It makes multiple contacts with different domains of the 23S rRNA in the assembled 50S subunit and ribosome. In terms of biological role, forms part of the polypeptide exit tunnel. In Acinetobacter baylyi (strain ATCC 33305 / BD413 / ADP1), this protein is Large ribosomal subunit protein uL4.